The chain runs to 568 residues: Urease subunit alpha (568 aa).

One can recognise a Urease domain in the interval 133–568 (GGLDIHIHFN…ELPLAQRYLL (436 aa)). The Ni(2+) site is built by His-138, His-140, and Lys-217. Lys-217 carries the post-translational modification N6-carboxylysine. His-219 is a binding site for substrate. 2 residues coordinate Ni(2+): His-246 and His-272. The active-site Proton donor is His-320. A Ni(2+)-binding site is contributed by Asp-360.

The protein belongs to the metallo-dependent hydrolases superfamily. Urease alpha subunit family. In terms of assembly, heterotrimer of UreA (gamma), UreB (beta) and UreC (alpha) subunits. Three heterotrimers associate to form the active enzyme. It depends on Ni cation as a cofactor. In terms of processing, carboxylation allows a single lysine to coordinate two nickel ions.

Its subcellular location is the cytoplasm. It catalyses the reaction urea + 2 H2O + H(+) = hydrogencarbonate + 2 NH4(+). Its pathway is nitrogen metabolism; urea degradation; CO(2) and NH(3) from urea (urease route): step 1/1. This Haloarcula marismortui (strain ATCC 43049 / DSM 3752 / JCM 8966 / VKM B-1809) (Halobacterium marismortui) protein is Urease subunit alpha.